The chain runs to 28 residues: Cyclotide vodo I1 (28 aa).

3 disulfides stabilise this stretch: cysteine 4-cysteine 18, cysteine 8-cysteine 20, and cysteine 13-cysteine 25.

This is a cyclic peptide. In terms of processing, contains 3 disulfide bonds.

Its function is as follows. Probably participates in a plant defense mechanism. This Viola odorata (Sweet violet) protein is Cyclotide vodo I1.